Here is a 181-residue protein sequence, read N- to C-terminus: ATP synthase subunit b, chloroplastic (181 aa).

The helical transmembrane segment at 27 to 49 threads the bilayer; that stretch reads LATNPINLSVVLGVVIYFGKGVL.

The protein belongs to the ATPase B chain family. F-type ATPases have 2 components, F(1) - the catalytic core - and F(0) - the membrane proton channel. F(1) has five subunits: alpha(3), beta(3), gamma(1), delta(1), epsilon(1). F(0) has four main subunits: a(1), b(1), b'(1) and c(10-14). The alpha and beta chains form an alternating ring which encloses part of the gamma chain. F(1) is attached to F(0) by a central stalk formed by the gamma and epsilon chains, while a peripheral stalk is formed by the delta, b and b' chains.

The protein localises to the plastid. Its subcellular location is the chloroplast thylakoid membrane. F(1)F(0) ATP synthase produces ATP from ADP in the presence of a proton or sodium gradient. F-type ATPases consist of two structural domains, F(1) containing the extramembraneous catalytic core and F(0) containing the membrane proton channel, linked together by a central stalk and a peripheral stalk. During catalysis, ATP synthesis in the catalytic domain of F(1) is coupled via a rotary mechanism of the central stalk subunits to proton translocation. Functionally, component of the F(0) channel, it forms part of the peripheral stalk, linking F(1) to F(0). The sequence is that of ATP synthase subunit b, chloroplastic from Lemna minor (Common duckweed).